Consider the following 206-residue polypeptide: Inner membrane-spanning protein YciB (206 aa).

A run of 5 helical transmembrane segments spans residues 22–42 (IYTATGALIVASAVQIILTYF), 50–70 (MQVITFLMVAVFGGMTIFLHD), 76–96 (WKVTIVYALFAIGLTVSHIMG), 118–138 (INWAWTLFFTLCAILNVYVAF), and 148–168 (FKVFGLLIATFAFTLLTGVYI). The segment covering 178–189 (LPKDKHQQRDQE) has biased composition (basic and acidic residues). Residues 178 to 206 (LPKDKHQQRDQETQNDTQQELSGKNTEEK) are disordered. A compositionally biased stretch (polar residues) spans 191–206 (QNDTQQELSGKNTEEK).

Belongs to the YciB family.

The protein localises to the cell inner membrane. Its function is as follows. Plays a role in cell envelope biogenesis, maintenance of cell envelope integrity and membrane homeostasis. This Vibrio atlanticus (strain LGP32) (Vibrio splendidus (strain Mel32)) protein is Inner membrane-spanning protein YciB.